A 267-amino-acid chain; its full sequence is U6 snRNA phosphodiesterase 1 (267 aa).

The segment covering 1 to 13 (MSSAPLVGYSSSG) has biased composition (polar residues). The disordered stretch occupies residues 1 to 74 (MSSAPLVGYS…DSAKHGGRIR (74 aa)). Catalysis depends on His122, which acts as the Proton acceptor. 122–124 (HVS) provides a ligand contact to AMP. UMP contacts are provided by residues Gln166, Tyr204, and 208–212 (SFHIS). Residues Tyr204 and 206–212 (DPSFHIS) contribute to the AMP site. His210 functions as the Proton donor in the catalytic mechanism.

Belongs to the 2H phosphoesterase superfamily. USB1 family. In terms of assembly, interacts with PLRG1, CDC5L and PRPF19.

It is found in the nucleus. It carries out the reaction a 3'-end uridylyl-uridine-RNA = a 3'-end 2',3'-cyclophospho-uridine-RNA + uridine. The catalysed reaction is a 3'-end uridylyl-adenosine-RNA = a 3'-end 2',3'-cyclophospho-uridine-RNA + adenosine. Its function is as follows. 3'-5' RNA exonuclease that trims the 3' end of oligo(U) and oligo(A) tracts of the pre-U6 small nuclear RNA (snRNA) molecule, leading to the formation of a mature U6 snRNA 3' end-terminated with a 2',3'-cyclic phosphate. Participates in the U6 snRNA 3' end processing that prevents U6 snRNA degradation. In addition also removes uridines from the 3' end of U6atac snRNA and possibly the vault RNA VTRNA1-1. The protein is U6 snRNA phosphodiesterase 1 of Mus musculus (Mouse).